We begin with the raw amino-acid sequence, 465 residues long: GTPase Der (465 aa).

EngA-type G domains follow at residues 3 to 167 (PLVA…PEEG) and 179 to 352 (IRIA…ESAN). GTP is bound by residues 9–16 (GRPNVGKS), 57–61 (DTGGI), 119–122 (NKID), 185–192 (GRPNVGKS), 232–236 (DTAGL), and 297–300 (NKWD). One can recognise a KH-like domain in the interval 353–437 (KTFTTSEVNK…PVSFIFREGT (85 aa)).

This sequence belongs to the TRAFAC class TrmE-Era-EngA-EngB-Septin-like GTPase superfamily. EngA (Der) GTPase family. In terms of assembly, associates with the 50S ribosomal subunit.

In terms of biological role, GTPase that plays an essential role in the late steps of ribosome biogenesis. In Stenotrophomonas maltophilia (strain K279a), this protein is GTPase Der.